The chain runs to 227 residues: Lipoprotein-releasing system ATP-binding protein LolD (227 aa).

The 222-residue stretch at 6-227 (LKCENINKFY…MQDGLLKEGA (222 aa)) folds into the ABC transporter domain. 42–49 (GSSGSGKS) serves as a coordination point for ATP.

Belongs to the ABC transporter superfamily. Lipoprotein translocase (TC 3.A.1.125) family. As to quaternary structure, the complex is composed of two ATP-binding proteins (LolD) and two transmembrane proteins (LolC and LolE).

It localises to the cell inner membrane. Functionally, part of the ABC transporter complex LolCDE involved in the translocation of mature outer membrane-directed lipoproteins, from the inner membrane to the periplasmic chaperone, LolA. Responsible for the formation of the LolA-lipoprotein complex in an ATP-dependent manner. This is Lipoprotein-releasing system ATP-binding protein LolD from Haemophilus influenzae (strain 86-028NP).